The chain runs to 83 residues: Exodeoxyribonuclease 7 small subunit (83 aa).

This sequence belongs to the XseB family. In terms of assembly, heterooligomer composed of large and small subunits.

Its subcellular location is the cytoplasm. It carries out the reaction Exonucleolytic cleavage in either 5'- to 3'- or 3'- to 5'-direction to yield nucleoside 5'-phosphates.. Bidirectionally degrades single-stranded DNA into large acid-insoluble oligonucleotides, which are then degraded further into small acid-soluble oligonucleotides. In Brucella melitensis biotype 1 (strain ATCC 23456 / CCUG 17765 / NCTC 10094 / 16M), this protein is Exodeoxyribonuclease 7 small subunit.